A 1299-amino-acid chain; its full sequence is Outer capsid protein VP1 (1299 aa).

Belongs to the aquareoviridae outer capsid VP1 protein family.

Its subcellular location is the virion. The enzyme catalyses a 5'-end diphospho-ribonucleoside in mRNA + GTP + H(+) = a 5'-end (5'-triphosphoguanosine)-ribonucleoside in mRNA + diphosphate. It carries out the reaction a 5'-end (5'-triphosphoguanosine)-ribonucleoside in mRNA + S-adenosyl-L-methionine = a 5'-end (N(7)-methyl 5'-triphosphoguanosine)-ribonucleoside in mRNA + S-adenosyl-L-homocysteine. In terms of biological role, outer capsid protein involved in mRNA capping. Catalyzes the last 3 enzymatic activities for formation of the 5' cap structure on the viral plus-strand transcripts, namely the RNA guanylyltransferase, RNA-7N- and RNA-2'O-methyltransferase activities. The polypeptide is Outer capsid protein VP1 (S1) (Aquareovirus C (isolate Golden shiner/USA/GSRV/1977) (AQRV-C)).